A 524-amino-acid chain; its full sequence is GMP synthase [glutamine-hydrolyzing] (524 aa).

Residues 5-195 (KVIVIDFGGQ…VRGVCGCAGT (191 aa)) form the Glutamine amidotransferase type-1 domain. Residue Cys82 is the Nucleophile of the active site. Active-site residues include His169 and Glu171. Residues 196 to 389 (WKMDAFVENT…LGIPEHLVFR (194 aa)) form the GMPS ATP-PPase domain. Residue 223-229 (SGGVDSS) coordinates ATP.

In terms of assembly, homodimer.

It catalyses the reaction XMP + L-glutamine + ATP + H2O = GMP + L-glutamate + AMP + diphosphate + 2 H(+). It participates in purine metabolism; GMP biosynthesis; GMP from XMP (L-Gln route): step 1/1. Its function is as follows. Catalyzes the synthesis of GMP from XMP. In Lachnospira eligens (strain ATCC 27750 / DSM 3376 / VPI C15-48 / C15-B4) (Eubacterium eligens), this protein is GMP synthase [glutamine-hydrolyzing].